The primary structure comprises 171 residues: 6,7-dimethyl-8-ribityllumazine synthase (171 aa).

Residues F24, 58-60 (ALE), and 82-84 (AVI) contribute to the 5-amino-6-(D-ribitylamino)uracil site. 87–88 (ET) contacts (2S)-2-hydroxy-3-oxobutyl phosphate. The active-site Proton donor is the H90. N115 provides a ligand contact to 5-amino-6-(D-ribitylamino)uracil. R129 is a (2S)-2-hydroxy-3-oxobutyl phosphate binding site. Residues 150 to 171 (ALDQLGDDEDEEEDEEDEEERA) are disordered. Acidic residues predominate over residues 154-171 (LGDDEDEEEDEEDEEERA).

Belongs to the DMRL synthase family.

The enzyme catalyses (2S)-2-hydroxy-3-oxobutyl phosphate + 5-amino-6-(D-ribitylamino)uracil = 6,7-dimethyl-8-(1-D-ribityl)lumazine + phosphate + 2 H2O + H(+). Its pathway is cofactor biosynthesis; riboflavin biosynthesis; riboflavin from 2-hydroxy-3-oxobutyl phosphate and 5-amino-6-(D-ribitylamino)uracil: step 1/2. Its function is as follows. Catalyzes the formation of 6,7-dimethyl-8-ribityllumazine by condensation of 5-amino-6-(D-ribitylamino)uracil with 3,4-dihydroxy-2-butanone 4-phosphate. This is the penultimate step in the biosynthesis of riboflavin. The protein is 6,7-dimethyl-8-ribityllumazine synthase of Burkholderia ambifaria (strain MC40-6).